A 181-amino-acid chain; its full sequence is Putative ankyrin repeat protein RBE_0150 (181 aa).

4 ANK repeats span residues 50–79, 83–114, 118–147, and 151–180; these read IGQK…KLGT, LGRT…DINA, SGST…DYFT, and LGQT…AGYY.

The polypeptide is Putative ankyrin repeat protein RBE_0150 (Rickettsia bellii (strain RML369-C)).